Reading from the N-terminus, the 209-residue chain is Na(+)-translocating NADH-quinone reductase subunit D (209 aa).

The next 5 helical transmembrane spans lie at 42–62 (LVMT…ISLI), 70–90 (VRII…DQIL), 103–123 (VFVG…AYAM), 131–151 (FMDG…VGFV), and 178–198 (NGLF…IWGL).

This sequence belongs to the NqrDE/RnfAE family. In terms of assembly, composed of six subunits; NqrA, NqrB, NqrC, NqrD, NqrE and NqrF.

Its subcellular location is the cell inner membrane. The enzyme catalyses a ubiquinone + n Na(+)(in) + NADH + H(+) = a ubiquinol + n Na(+)(out) + NAD(+). Functionally, NQR complex catalyzes the reduction of ubiquinone-1 to ubiquinol by two successive reactions, coupled with the transport of Na(+) ions from the cytoplasm to the periplasm. NqrA to NqrE are probably involved in the second step, the conversion of ubisemiquinone to ubiquinol. The chain is Na(+)-translocating NADH-quinone reductase subunit D from Yersinia enterocolitica serotype O:8 / biotype 1B (strain NCTC 13174 / 8081).